A 165-amino-acid polypeptide reads, in one-letter code: Protein SprT (165 aa).

The region spanning 10-157 (EACYRQAEDF…YCRRCKATLV (148 aa)) is the SprT-like domain. H69 is a Zn(2+) binding site. The active site involves E70. H73 is a binding site for Zn(2+).

The protein belongs to the SprT family. Requires Zn(2+) as cofactor.

It localises to the cytoplasm. The polypeptide is Protein SprT (Pseudomonas paraeruginosa (strain DSM 24068 / PA7) (Pseudomonas aeruginosa (strain PA7))).